A 371-amino-acid chain; its full sequence is Protein NDRG2 (371 aa).

Residues 1 to 22 (MAELQEVQITEEKPLLPGQTPE) form a disordered region. Ala2 carries the post-translational modification N-acetylalanine. Thr20 is subject to Phosphothreonine. Ser326 and Ser328 each carry phosphoserine. Thr330 is subject to Phosphothreonine; by SGK1. A Phosphoserine; by PKC/PRKCQ or SGK1 modification is found at Ser332. Thr334 is subject to Phosphothreonine. The segment at 334–371 (TSAASIDGSRSRSRTLSQSSESGTLPSGPPGHTMEVSC) is disordered. Phosphoserine occurs at positions 335, 338, and 344. Thr348 is subject to Phosphothreonine; by PKB/AKT1 or SGK1. Phosphoserine occurs at positions 350, 352, 353, and 355. Thr357 carries the phosphothreonine modification. Ser370 is subject to Phosphoserine.

The protein belongs to the NDRG family. Interacts with CTNNB1. As to expression, expressed at highest levels in brain, heart and liver, and at lower levels in kidney, colon, skeletal muscle, adrenal gland, ovary and uterus (at protein level).

The protein localises to the cytoplasm. It is found in the perinuclear region. The protein resides in the cell projection. It localises to the growth cone. In terms of biological role, contributes to the regulation of the Wnt signaling pathway. Down-regulates CTNNB1-mediated transcriptional activation of target genes, such as CCND1, and may thereby act as tumor suppressor. May be involved in dendritic cell and neuron differentiation. In Mus musculus (Mouse), this protein is Protein NDRG2 (Ndrg2).